The primary structure comprises 150 residues: Transthyretin (150 aa).

The first 20 residues, 1–20 (MAFHSTLLVFLAGLVFLSEA), serve as a signal peptide directing secretion. Position 33 is a sulfocysteine (cysteine 33). Positions 38, 77, and 140 each coordinate L-thyroxine.

The protein belongs to the transthyretin family. Homotetramer. Dimer of dimers. In the homotetramer, subunits assemble around a central channel that can accommodate two ligand molecules. Sulfonation of the reactive cysteine Cys-33 enhances the stability of the native conformation of TTR, avoiding misassembly of the protein leading to amyloid formation. As to expression, detected in serum (at protein level). Detected in liver and choroid plexus.

It is found in the secreted. Thyroid hormone-binding protein. Probably transports thyroxine from the bloodstream to the brain. This Gallus gallus (Chicken) protein is Transthyretin (TTR).